The primary structure comprises 254 residues: Diphthine synthase (254 aa).

Residues Leu-11, Asp-87, Ile-90, 115-116 (SV), Leu-167, Leu-208, and His-233 each bind S-adenosyl-L-methionine.

It belongs to the diphthine synthase family. As to quaternary structure, homodimer.

The enzyme catalyses 2-[(3S)-amino-3-carboxypropyl]-L-histidyl-[translation elongation factor 2] + 3 S-adenosyl-L-methionine = diphthine-[translation elongation factor 2] + 3 S-adenosyl-L-homocysteine + 3 H(+). It participates in protein modification; peptidyl-diphthamide biosynthesis. Its function is as follows. S-adenosyl-L-methionine-dependent methyltransferase that catalyzes the trimethylation of the amino group of the modified target histidine residue in translation elongation factor 2 (EF-2), to form an intermediate called diphthine. The three successive methylation reactions represent the second step of diphthamide biosynthesis. The protein is Diphthine synthase of Metallosphaera sedula (strain ATCC 51363 / DSM 5348 / JCM 9185 / NBRC 15509 / TH2).